Reading from the N-terminus, the 404-residue chain is Argininosuccinate synthase (404 aa).

ATP-binding positions include Ala10 to Ser18 and Ala37. The L-citrulline site is built by Tyr88 and Ser93. Gly118 is an ATP binding site. 3 residues coordinate L-aspartate: Thr120, Asn124, and Asp125. L-citrulline is bound at residue Asn124. 5 residues coordinate L-citrulline: Arg128, Ser179, Ser188, Glu264, and Tyr276.

The protein belongs to the argininosuccinate synthase family. Type 1 subfamily. Homotetramer.

It is found in the cytoplasm. It carries out the reaction L-citrulline + L-aspartate + ATP = 2-(N(omega)-L-arginino)succinate + AMP + diphosphate + H(+). The protein operates within amino-acid biosynthesis; L-arginine biosynthesis; L-arginine from L-ornithine and carbamoyl phosphate: step 2/3. In Nitrosomonas europaea (strain ATCC 19718 / CIP 103999 / KCTC 2705 / NBRC 14298), this protein is Argininosuccinate synthase.